We begin with the raw amino-acid sequence, 123 residues long: Small ribosomal subunit protein uS12cz/uS12cy (123 aa).

The protein belongs to the universal ribosomal protein uS12 family. Part of the 30S ribosomal subunit.

The protein resides in the plastid. The protein localises to the chloroplast. Its function is as follows. With S4 and S5 plays an important role in translational accuracy. Located at the interface of the 30S and 50S subunits. The sequence is that of Small ribosomal subunit protein uS12cz/uS12cy (rps12-A) from Platanus occidentalis (Sycamore).